Here is a 1444-residue protein sequence, read N- to C-terminus: DNA polymerase III PolC-type (1444 aa).

One can recognise an Exonuclease domain in the interval Tyr428–Ala584.

This sequence belongs to the DNA polymerase type-C family. PolC subfamily.

It is found in the cytoplasm. It carries out the reaction DNA(n) + a 2'-deoxyribonucleoside 5'-triphosphate = DNA(n+1) + diphosphate. Its function is as follows. Required for replicative DNA synthesis. This DNA polymerase also exhibits 3' to 5' exonuclease activity. The chain is DNA polymerase III PolC-type from Listeria innocua serovar 6a (strain ATCC BAA-680 / CLIP 11262).